The primary structure comprises 271 residues: Thymidine kinase (271 aa).

ATP contacts are provided by residues 74 to 81 (GPMFAGKT) and 152 to 155 (DEAQ). Catalysis depends on Glu153, which acts as the Proton acceptor. Tyr184 provides a ligand contact to substrate. 2 residues coordinate Zn(2+): Cys209 and Cys212. Residue Tyr237 participates in substrate binding. Zn(2+) is bound at residue Cys241.

Belongs to the thymidine kinase family.

The enzyme catalyses thymidine + ATP = dTMP + ADP + H(+). In Oryza sativa subsp. japonica (Rice), this protein is Thymidine kinase (TK).